The following is a 909-amino-acid chain: Valine--tRNA ligase (909 aa).

The 'HIGH' region signature appears at 52–62; sequence PNVTGVLHVGH. Positions 542–546 match the 'KMSKS' region motif; it reads KMSKS. K545 is a binding site for ATP. Residues 843-902 are a coiled coil; the sequence is IDIDQLKKRFEKELEKNEQNASKIDSKLKNENFVKNAPPEVIEGEKEKHAEFLRRIEKLK.

The protein belongs to the class-I aminoacyl-tRNA synthetase family. ValS type 1 subfamily. Monomer.

The protein resides in the cytoplasm. It catalyses the reaction tRNA(Val) + L-valine + ATP = L-valyl-tRNA(Val) + AMP + diphosphate. Functionally, catalyzes the attachment of valine to tRNA(Val). As ValRS can inadvertently accommodate and process structurally similar amino acids such as threonine, to avoid such errors, it has a 'posttransfer' editing activity that hydrolyzes mischarged Thr-tRNA(Val) in a tRNA-dependent manner. This Treponema denticola (strain ATCC 35405 / DSM 14222 / CIP 103919 / JCM 8153 / KCTC 15104) protein is Valine--tRNA ligase.